We begin with the raw amino-acid sequence, 346 residues long: MQQEKELVKQKAKELLLDLLSIYTPSKNETNATKFFEKISNEFNLKLEILPDSNSFILGEGEILLASHVDTVPGYIEPKIENEVIYGRGAVDAKGPLISMIIAAWLLNEKGIKVMVSGLADEESTSIGAKELTLKNFNFKHIIVGEPSNGTDIVVEYRGSIQLDIMCESTPEHSSSAKSNLIVDISKKIIEVYKQPENYDKPSIVPTIIRAGESYNVTPAKLYLHFDVRYAINNKRDDLINEIKDKFQECGLKIVDETPPVKVSINNPVVKSLTRALLKQNIKPRLVRKAGTSDMNILQKITTSIATYGPGNSMLEHTNQEKITLDEIYIGVKTYMLAIEELWQKS.

His68 is a binding site for Zn(2+). Asp70 is an active-site residue. Zn(2+) is bound at residue Asp92. The active-site Proton acceptor is Glu122. Residues Glu123, Glu146, and His317 each coordinate Zn(2+).

This sequence belongs to the peptidase M20A family. LysK subfamily. It depends on Zn(2+) as a cofactor. Co(2+) serves as cofactor.

It localises to the cytoplasm. It catalyses the reaction [amino-group carrier protein]-C-terminal-gamma-(L-lysyl)-L-glutamate + H2O = [amino-group carrier protein]-C-terminal-L-glutamate + L-lysine. The catalysed reaction is [amino-group carrier protein]-C-terminal-gamma-(L-ornithyl)-L-glutamate + H2O = [amino-group carrier protein]-C-terminal-L-glutamate + L-ornithine. Its pathway is amino-acid biosynthesis; L-lysine biosynthesis via AAA pathway; L-lysine from L-alpha-aminoadipate (Thermus route): step 5/5. The protein operates within amino-acid biosynthesis; L-arginine biosynthesis. In terms of biological role, catalyzes the release of L-lysine from [LysW]-gamma-L-lysine and the release of L-ornithine from [LysW]-L-ornithine. The sequence is that of [LysW]-lysine/[LysW]-ornithine hydrolase from Saccharolobus islandicus (strain Y.G.57.14 / Yellowstone #1) (Sulfolobus islandicus).